Here is a 456-residue protein sequence, read N- to C-terminus: Cysteine--tRNA ligase (456 aa).

Cysteine 28 is a Zn(2+) binding site. Residues 30 to 40 (ITVYDHCHLGH) carry the 'HIGH' region motif. 3 residues coordinate Zn(2+): cysteine 209, histidine 234, and glutamate 238. The 'KMSKS' region signature appears at 266–270 (KMAKS). Lysine 269 contacts ATP.

This sequence belongs to the class-I aminoacyl-tRNA synthetase family. In terms of assembly, monomer. Zn(2+) is required as a cofactor.

It is found in the cytoplasm. The enzyme catalyses tRNA(Cys) + L-cysteine + ATP = L-cysteinyl-tRNA(Cys) + AMP + diphosphate. This chain is Cysteine--tRNA ligase, found in Legionella pneumophila (strain Paris).